We begin with the raw amino-acid sequence, 695 residues long: RING finger protein 145 (695 aa).

Transmembrane regions (helical) follow at residues 53 to 73 (YLALNMHYVGYILSVVLLTLP), 77 to 97 (LAKLYLYFVAALLLFAGHQIS), 123 to 143 (FITALVGQLVVCTLCSCVMKT), 146 to 166 (IWLFSAHMLPLLARLCLIPIE), 168 to 188 (IVVINKFAMIFTGLEVLYFLA), 225 to 245 (LVVPVLFMVFWLVLFALQIYT), 275 to 295 (YSLLGLVFTVSFVALGVLTLC), 316 to 336 (TEGVTLLILAVQTGLIELQVV), 340 to 360 (FLLSIILFIVVASILQSMLEI), 384 to 404 (SLCLFLLVFPSYMAYMICQFF), 410 to 430 (LLIIISSSILTSLQVLGTLFV), 460 to 480 (LLEFLVALCVVAYGVSETVFG), and 482 to 502 (WTVMGSMIIFIHSYYNVWLRA). The segment at 537–575 (CSICYQDMNSAVITPCSHFFHPGCLKKWLYVQETCPLCH) adopts an RING-type; atypical zinc-finger fold. Residues 589-604 (SGSSTNPVVEQSANNP) are compositionally biased toward polar residues. Residues 589–608 (SGSSTNPVVEQSANNPPQEP) are disordered.

The protein localises to the membrane. The chain is RING finger protein 145 (rnf145) from Xenopus laevis (African clawed frog).